Here is a 166-residue protein sequence, read N- to C-terminus: Small ribosomal subunit protein bS6 (166 aa).

Composition is skewed to basic and acidic residues over residues 96-142 and 149-166; these read HEEG…DRPP and GGDRGPRRPREGFEGGAE. The interval 96–166 is disordered; that stretch reads HEEGPSAMMQ…PREGFEGGAE (71 aa).

The protein belongs to the bacterial ribosomal protein bS6 family.

Functionally, binds together with bS18 to 16S ribosomal RNA. In Mesorhizobium japonicum (strain LMG 29417 / CECT 9101 / MAFF 303099) (Mesorhizobium loti (strain MAFF 303099)), this protein is Small ribosomal subunit protein bS6.